The sequence spans 330 residues: D-cysteine desulfhydrase (330 aa).

Position 52 is an N6-(pyridoxal phosphate)lysine (K52).

Belongs to the ACC deaminase/D-cysteine desulfhydrase family. As to quaternary structure, homodimer. It depends on pyridoxal 5'-phosphate as a cofactor.

It carries out the reaction D-cysteine + H2O = hydrogen sulfide + pyruvate + NH4(+) + H(+). Its function is as follows. Catalyzes the alpha,beta-elimination reaction of D-cysteine and of several D-cysteine derivatives. It could be a defense mechanism against D-cysteine. The chain is D-cysteine desulfhydrase from Serratia proteamaculans (strain 568).